We begin with the raw amino-acid sequence, 354 residues long: S-adenosylmethionine:tRNA ribosyltransferase-isomerase (354 aa).

It belongs to the QueA family. In terms of assembly, monomer.

It localises to the cytoplasm. It catalyses the reaction 7-aminomethyl-7-carbaguanosine(34) in tRNA + S-adenosyl-L-methionine = epoxyqueuosine(34) in tRNA + adenine + L-methionine + 2 H(+). It functions in the pathway tRNA modification; tRNA-queuosine biosynthesis. Transfers and isomerizes the ribose moiety from AdoMet to the 7-aminomethyl group of 7-deazaguanine (preQ1-tRNA) to give epoxyqueuosine (oQ-tRNA). The chain is S-adenosylmethionine:tRNA ribosyltransferase-isomerase from Thermosynechococcus vestitus (strain NIES-2133 / IAM M-273 / BP-1).